A 380-amino-acid polypeptide reads, in one-letter code: Tubby-like F-box protein 9 (380 aa).

Positions 30 to 76 (PFSWSELPEELLREILIRVETVDGGDWPSRRNVVACAGVCRSWRILT) constitute an F-box domain. Positions 258-283 (SSRSSPVFRSHSKPLRSNSASCSDSG) are disordered. Over residues 272–283 (LRSNSASCSDSG) the composition is skewed to polar residues.

It belongs to the TUB family. As to quaternary structure, part of a SCF (SKP1-cullin-F-box) protein ligase complex. Interacts with SKP1A/ASK1 and XERICO. In terms of tissue distribution, ubiquitous.

The protein operates within protein modification; protein ubiquitination. Functionally, component of SCF(ASK-cullin-F-box) E3 ubiquitin ligase complexes, which may mediate the ubiquitination and subsequent proteasomal degradation of target proteins. Confers sensitivity to ABA during seed germination and early seedling development. This chain is Tubby-like F-box protein 9, found in Arabidopsis thaliana (Mouse-ear cress).